Consider the following 357-residue polypeptide: Arginine kinase Cal b 2.0101 (357 aa).

A Phosphagen kinase N-terminal domain is found at 9-91; the sequence is KLEEGFKKLE…FDPIIEDYHK (83 aa). 64-68 contributes to the L-arginine binding site; that stretch reads GVGVY. The Phosphagen kinase C-terminal domain maps to 119 to 356; that stretch reads FVISTRVRCG…LELIKIEKEM (238 aa). Residues 122-126 and His-185 each bind ATP; that span reads STRVR. Cys-201 and Cys-271 are joined by a disulfide. Glu-225 provides a ligand contact to L-arginine. ATP is bound at residue Arg-229. L-arginine is bound at residue Cys-271. ATP contacts are provided by residues 280–284 and 309–314; these read RASVH and RGTRGE. An L-arginine-binding site is contributed by Glu-314.

This sequence belongs to the ATP:guanido phosphotransferase family. In terms of tissue distribution, expressed in chela muscle (at protein level). Expressed in muscle.

It carries out the reaction L-arginine + ATP = N(omega)-phospho-L-arginine + ADP + H(+). Its function is as follows. Catalyzes the reversible transfer of high energy ATP gamma-phosphate group to L-arginine. This Callinectes bellicosus (Warrior swimming crab) protein is Arginine kinase Cal b 2.0101.